A 361-amino-acid polypeptide reads, in one-letter code: Probable galacturonosyltransferase-like 7 (361 aa).

Residues 1 to 21 (MLWIMRFSGLFSAALVIIVLS) traverse the membrane as a helical; Signal-anchor for type II membrane protein segment. Topologically, residues 22–361 (PSLQSFPPAE…PYDLYGHYSR (340 aa)) are lumenal. An N-linked (GlcNAc...) asparagine glycan is attached at N217.

This sequence belongs to the glycosyltransferase 8 family.

It localises to the golgi apparatus membrane. It participates in glycan metabolism; pectin biosynthesis. Functionally, may be involved in pectin and/or xylans biosynthesis in cell walls. The polypeptide is Probable galacturonosyltransferase-like 7 (GATL7) (Arabidopsis thaliana (Mouse-ear cress)).